We begin with the raw amino-acid sequence, 189 residues long: Prostaglandin-H2 D-isomerase (189 aa).

The signal sequence occupies residues 1–24; that stretch reads MATPSSLWLGLALLGTLGVLQTPA. Pyrrolidone carboxylic acid is present on Q25. An N-linked (GlcNAc...) asparagine glycan is attached at N49. The active-site Nucleophile is C63. N-linked (GlcNAc...) asparagine glycosylation occurs at N76. A disulfide bridge connects residues C87 and C184.

The protein belongs to the calycin superfamily. Lipocalin family. As to quaternary structure, monomer. In terms of tissue distribution, abundant in the brain and CNS, where it is expressed in tissues of the blood-brain barrier and secreted into the cerebro-spinal fluid.

The protein localises to the rough endoplasmic reticulum. It is found in the nucleus membrane. The protein resides in the golgi apparatus. It localises to the cytoplasm. Its subcellular location is the perinuclear region. The protein localises to the secreted. The enzyme catalyses prostaglandin H2 = prostaglandin D2. Catalyzes the conversion of PGH2 to PGD2, a prostaglandin involved in smooth muscle contraction/relaxation and a potent inhibitor of platelet aggregation. Involved in a variety of CNS functions, such as sedation, NREM sleep and PGE2-induced allodynia, and may have an anti-apoptotic role in oligodendrocytes. Binds small non-substrate lipophilic molecules, including biliverdin, bilirubin, retinal, retinoic acid and thyroid hormone, and may act as a scavenger for harmful hydrophobic molecules and as a secretory retinoid and thyroid hormone transporter. Possibly involved in development and maintenance of the blood-brain, blood-retina, blood-aqueous humor and blood-testis barrier. It is likely to play important roles in both maturation and maintenance of the central nervous system and male reproductive system. Involved in PLA2G3-dependent maturation of mast cells. PLA2G3 is secreted by immature mast cells and acts on nearby fibroblasts upstream to PTDGS to synthesize PGD2, which in turn promotes mast cell maturation and degranulation via PTGDR. The protein is Prostaglandin-H2 D-isomerase (PTGDS) of Sus scrofa (Pig).